We begin with the raw amino-acid sequence, 214 residues long: Phosphatidyl-N-methylethanolamine N-methyltransferase (214 aa).

The Lumenal portion of the chain corresponds to 1–19 (MPLVALGVADLFNFVDYSK). The segment at residues 20-40 (TSLAISAAAIAFNPTFWNIVA) is an intramembrane region (helical). Residues 41 to 52 (RREYRTKFLTRA) are Lumenal-facing. Residues 53-74 (FGGNAQVACYFLAVTIFGLGLV) form a helical membrane-spanning segment. Residues 75-101 (RDFLYERALRDQPSHPLLEGTYVKYAA) lie on the Cytoplasmic side of the membrane. Residues 102–122 (YALLALGNLLVITSTMRLGIT) form a helical membrane-spanning segment. 106-108 (ALG) is an S-adenosyl-L-methionine binding site. Topologically, residues 123–165 (GTFLGDYFGILMDGIVTGFPFNVTSAPMYYGSTMSFLGTALLY) are lumenal. A helical transmembrane segment spans residues 166 to 186 (GKPAGLLLTAWVLFVYIIAIQ). Residues 187 to 214 (FENPFTAEIYAKRDRERAKAAGTSKKEL) are Cytoplasmic-facing. S-adenosyl-L-methionine is bound at residue 188 to 189 (EN).

It belongs to the class VI-like SAM-binding methyltransferase superfamily. PEMT/PEM2 methyltransferase family.

The protein resides in the endoplasmic reticulum membrane. It localises to the mitochondrion membrane. The enzyme catalyses a 1,2-diacyl-sn-glycero-3-phospho-N-methylethanolamine + S-adenosyl-L-methionine = a 1,2-diacyl-sn-glycero-3-phospho-N,N-dimethylethanolamine + S-adenosyl-L-homocysteine + H(+). It carries out the reaction a 1,2-diacyl-sn-glycero-3-phospho-N,N-dimethylethanolamine + S-adenosyl-L-methionine = a 1,2-diacyl-sn-glycero-3-phosphocholine + S-adenosyl-L-homocysteine + H(+). It functions in the pathway phospholipid metabolism; phosphatidylcholine biosynthesis. In terms of biological role, catalyzes the second two steps of the methylation pathway of phosphatidylcholine biosynthesis, the SAM-dependent methylation of phosphatidylmonomethylethanolamine (PMME) to phosphatidyldimethylethanolamine (PDME) and of PDME to phosphatidylcholine (PC). The polypeptide is Phosphatidyl-N-methylethanolamine N-methyltransferase (Neurospora crassa (strain ATCC 24698 / 74-OR23-1A / CBS 708.71 / DSM 1257 / FGSC 987)).